A 95-amino-acid polypeptide reads, in one-letter code: Small ribosomal subunit protein bS21 (95 aa).

The disordered stretch occupies residues 55–95; that stretch reads RKLARKKMQREGLLPMKPKPVFGAGPGAGRGGPGAGARPPR. The segment covering 78–89 has biased composition (gly residues); the sequence is AGPGAGRGGPGA.

Belongs to the bacterial ribosomal protein bS21 family.

In Nitrobacter hamburgensis (strain DSM 10229 / NCIMB 13809 / X14), this protein is Small ribosomal subunit protein bS21.